A 197-amino-acid chain; its full sequence is ATP-dependent Clp protease proteolytic subunit 2 (197 aa).

The active-site Nucleophile is Ser96. His121 is an active-site residue.

It belongs to the peptidase S14 family. Fourteen ClpP subunits assemble into 2 heptameric rings which stack back to back to give a disk-like structure with a central cavity, resembling the structure of eukaryotic proteasomes.

The protein localises to the cytoplasm. The catalysed reaction is Hydrolysis of proteins to small peptides in the presence of ATP and magnesium. alpha-casein is the usual test substrate. In the absence of ATP, only oligopeptides shorter than five residues are hydrolyzed (such as succinyl-Leu-Tyr-|-NHMec, and Leu-Tyr-Leu-|-Tyr-Trp, in which cleavage of the -Tyr-|-Leu- and -Tyr-|-Trp bonds also occurs).. In terms of biological role, cleaves peptides in various proteins in a process that requires ATP hydrolysis. Has a chymotrypsin-like activity. Plays a major role in the degradation of misfolded proteins. The chain is ATP-dependent Clp protease proteolytic subunit 2 from Synechococcus sp. (strain CC9605).